Reading from the N-terminus, the 619-residue chain is Transcription factor 7-like 2 (619 aa).

Gly residues predominate over residues 1–11; the sequence is MPQLNGGGGDD. The CTNNB1-binding stretch occupies residues 1–53; it reads MPQLNGGGGDDLGANDELISFKDEGEQEEKSSENSSAERDLADVKSSLVNESE. Positions 1 to 96 are disordered; the sequence is MPQLNGGGGD…AKRQDGGLFK (96 aa). Residues 19–43 are compositionally biased toward basic and acidic residues; it reads ISFKDEGEQEEKSSENSSAERDLAD. A Glycyl lysine isopeptide (Lys-Gly) (interchain with G-Cter in SUMO2) cross-link involves residue Lys22. The segment covering 47–57 has biased composition (polar residues); it reads SLVNESETNQN. The span at 63 to 91 shows a compositional bias: basic and acidic residues; that stretch reads EAERRPPPRSESFRDKSRESLEEAAKRQD. Residues Thr201 and Thr212 each carry the phosphothreonine; by NLK modification. The mediates interaction with MAD2L2 stretch occupies residues 201–395; the sequence is TPLITYSNEH…RRWHALSREE (195 aa). Residues 318 to 328 show a composition bias toward polar residues; it reads TVKQESSQSDV. Disordered regions lie at residues 318–350, 420–441, 496–547, and 574–619; these read TVKQ…KPHI, RDNY…TNEH, CLSP…AHLS, and DLPP…KSLE. Residue Lys320 forms a Glycyl lysine isopeptide (Lys-Gly) (interchain with G-Cter in SUMO) linkage. Residues 335 to 346 show a composition bias toward basic and acidic residues; that stretch reads KHQDSKKEEEKK. Positions 350-418 form a DNA-binding region, HMG box; the sequence is IKKPLNAFML…LHMQLYPGWS (69 aa). Residues 425 to 430 carry the Nuclear localization signal motif; that stretch reads KKKKRK. The promoter-specific activation domain stretch occupies residues 459 to 505; the sequence is SAPKKCRARFGLDQQNNWCGPCRRKKKCVRYIQGEGSCLSPPSSDGS. A compositionally biased stretch (low complexity) spans 496 to 508; that stretch reads CLSPPSSDGSLLD. Lys539 participates in a covalent cross-link: Glycyl lysine isopeptide (Lys-Gly) (interchain with G-Cter in SUMO2). A compositionally biased stretch (low complexity) spans 574–603; sequence DLPPAALQPAAPSSSIAQPSTSSLHSHSSL. Polar residues predominate over residues 604–619; that stretch reads AGTQPQPLSLVTKSLE.

The protein belongs to the TCF/LEF family. Interacts with TGFB1I1. Interacts with CTNNB1 (via the armadillo repeat); forms stable transcription complex. Interacts with EP300. Interacts with NLK. Interacts with CCDC85B (probably through the HMG box); prevents interaction with CTNNB1. Interacts with TNIK. Interacts with MAD2L2; prevents TCF7L2/TCF4 binding to promZIPK/DAPK3oters, negatively modulating its transcriptional activity. Interacts with ZIPK/DAPK3. Interacts with XIAP/BIRC4 and TLE3. Interacts with DDIT3/CHOP. The CTNNB1 and TCF7L2/TCF4 complex interacts with PML (isoform PML-4). Identified in a complex with CTNNB1 and FERMT2. Interacts with SPIN1. Interacts with C11orf84/SPINDOC in a SPIN1-dependent manner. Interacts with DAZAP2; the interaction results in localization of DAZAP2 to the nucleus. In vitro, phosphorylated by TNIK. Post-translationally, phosphorylated at Thr-201 and/or Thr-212 by NLK. Phosphorylation by NLK at these sites inhibits DNA-binding by TCF7L2/TCF4, thereby preventing transcriptional activation of target genes of the canonical Wnt/beta-catenin signaling pathway. In terms of processing, polysumoylated. Sumoylation is enhanced by PIAS family members and desumoylation is enhanced by SENP2. Sumoylation/desumoylation regulates TCF7L2/TCF4 transcription activity in the Wnt/beta-catenin signaling pathway without altering interaction with CTNNB1 nor binding to DNA. In terms of tissue distribution, detected in epithelium from small intestine, with the highest expression at the top of the crypts and a gradient of expression from crypt to villus. Detected in colon epithelium and colon cancer, and in epithelium from mammary gland and carcinomas derived therefrom.

The protein localises to the nucleus. Its subcellular location is the PML body. In terms of biological role, participates in the Wnt signaling pathway and modulates MYC expression by binding to its promoter in a sequence-specific manner. Acts as a repressor in the absence of CTNNB1, and as activator in its presence. Activates transcription from promoters with several copies of the Tcf motif 5'-CCTTTGATC-3' in the presence of CTNNB1. TLE1, TLE2, TLE3 and TLE4 repress transactivation mediated by TCF7L2/TCF4 and CTNNB1. Expression of dominant-negative mutants results in cell-cycle arrest in G1. Necessary for the maintenance of the epithelial stem-cell compartment of the small intestine. In Homo sapiens (Human), this protein is Transcription factor 7-like 2 (TCF7L2).